Reading from the N-terminus, the 323-residue chain is Fructose-1,6-bisphosphatase class 1 (323 aa).

Mg(2+) contacts are provided by E93, D114, L116, and D117. Substrate-binding positions include 117–120 (DGSS), N205, Y233, and K263. E269 lines the Mg(2+) pocket.

This sequence belongs to the FBPase class 1 family. Homotetramer. Mg(2+) serves as cofactor.

Its subcellular location is the cytoplasm. It carries out the reaction beta-D-fructose 1,6-bisphosphate + H2O = beta-D-fructose 6-phosphate + phosphate. It participates in carbohydrate biosynthesis; gluconeogenesis. This is Fructose-1,6-bisphosphatase class 1 from Sulfurihydrogenibium sp. (strain YO3AOP1).